Reading from the N-terminus, the 204-residue chain is Thiamine-phosphate synthase (204 aa).

Residues 32–36 (QLRMK) and D64 contribute to the 4-amino-2-methyl-5-(diphosphooxymethyl)pyrimidine site. Positions 65 and 84 each coordinate Mg(2+). 4-amino-2-methyl-5-(diphosphooxymethyl)pyrimidine is bound at residue T103. 129-131 (TTT) is a 2-[(2R,5Z)-2-carboxy-4-methylthiazol-5(2H)-ylidene]ethyl phosphate binding site. 4-amino-2-methyl-5-(diphosphooxymethyl)pyrimidine is bound at residue K132. G165 provides a ligand contact to 2-[(2R,5Z)-2-carboxy-4-methylthiazol-5(2H)-ylidene]ethyl phosphate.

The protein belongs to the thiamine-phosphate synthase family. Mg(2+) is required as a cofactor.

The catalysed reaction is 2-[(2R,5Z)-2-carboxy-4-methylthiazol-5(2H)-ylidene]ethyl phosphate + 4-amino-2-methyl-5-(diphosphooxymethyl)pyrimidine + 2 H(+) = thiamine phosphate + CO2 + diphosphate. It catalyses the reaction 2-(2-carboxy-4-methylthiazol-5-yl)ethyl phosphate + 4-amino-2-methyl-5-(diphosphooxymethyl)pyrimidine + 2 H(+) = thiamine phosphate + CO2 + diphosphate. It carries out the reaction 4-methyl-5-(2-phosphooxyethyl)-thiazole + 4-amino-2-methyl-5-(diphosphooxymethyl)pyrimidine + H(+) = thiamine phosphate + diphosphate. Its pathway is cofactor biosynthesis; thiamine diphosphate biosynthesis; thiamine phosphate from 4-amino-2-methyl-5-diphosphomethylpyrimidine and 4-methyl-5-(2-phosphoethyl)-thiazole: step 1/1. Functionally, condenses 4-methyl-5-(beta-hydroxyethyl)thiazole monophosphate (THZ-P) and 2-methyl-4-amino-5-hydroxymethyl pyrimidine pyrophosphate (HMP-PP) to form thiamine monophosphate (TMP). This chain is Thiamine-phosphate synthase, found in Bacteroides fragilis (strain YCH46).